The chain runs to 278 residues: Ribosomal RNA small subunit methyltransferase A (278 aa).

S-adenosyl-L-methionine-binding residues include N27, L29, G54, E75, D95, and N118.

This sequence belongs to the class I-like SAM-binding methyltransferase superfamily. rRNA adenine N(6)-methyltransferase family. RsmA subfamily.

It is found in the cytoplasm. The catalysed reaction is adenosine(1518)/adenosine(1519) in 16S rRNA + 4 S-adenosyl-L-methionine = N(6)-dimethyladenosine(1518)/N(6)-dimethyladenosine(1519) in 16S rRNA + 4 S-adenosyl-L-homocysteine + 4 H(+). In terms of biological role, specifically dimethylates two adjacent adenosines (A1518 and A1519) in the loop of a conserved hairpin near the 3'-end of 16S rRNA in the 30S particle. May play a critical role in biogenesis of 30S subunits. The sequence is that of Ribosomal RNA small subunit methyltransferase A from Chlamydia caviae (strain ATCC VR-813 / DSM 19441 / 03DC25 / GPIC) (Chlamydophila caviae).